The primary structure comprises 917 residues: Interleukin-6 receptor subunit beta (917 aa).

The first 22 residues, 1 to 22 (MSAPRIWLAQALLFFLTTESIG), serve as a signal peptide directing secretion. Residues 23–617 (QLLEPCGYIY…TPKFAQGEIE (595 aa)) lie on the Extracellular side of the membrane. One can recognise an Ig-like C2-type domain in the interval 26–120 (EPCGYIYPEF…IEQNVYGVTM (95 aa)). Intrachain disulfides connect Cys-28–Cys-54 and Cys-48–Cys-103. 4 N-linked (GlcNAc...) asparagine glycosylation sites follow: Asn-43, Asn-61, Asn-83, and Asn-131. Fibronectin type-III domains are found at residues 128–221 (KPTN…VKPT), 222–322 (PPYN…TYED), 327–417 (PPSF…IPSP), 422–515 (AYSV…LKQA), and 517–611 (PARG…TPKF). A disulfide bond links Cys-134 and Cys-144. Asn-157 carries N-linked (GlcNAc...) asparagine glycosylation. A disulfide bond links Cys-172 and Cys-180. Asn-225 carries an N-linked (GlcNAc...) asparagine glycan. Positions 308–312 (WSDWS) match the WSXWS motif motif. Asn-388 is a glycosylation site (N-linked (GlcNAc...) asparagine). Residues Cys-456 and Cys-464 are joined by a disulfide bond. Residues Asn-476 and Asn-551 are each glycosylated (N-linked (GlcNAc...) asparagine). The helical transmembrane segment at 618–639 (AIVVPVCLAFLLTTLLGVLFCF) threads the bilayer. At 640-917 (NKRDLIKKHI…TVRQGGYMPQ (278 aa)) the chain is on the cytoplasmic side. A Box 1 motif motif is present at residues 649 to 657 (IWPNVPDPS). Disordered regions lie at residues 658–678 (KSHIAQWSPHTPPRHNFNSKD) and 719–754 (TEGHSSGIGGSSCMSSSRPSISSNEENESAQSTAST). Residues Ser-659 and Ser-665 each carry the phosphoserine modification. The span at 729–753 (SSCMSSSRPSISSNEENESAQSTAS) shows a compositional bias: low complexity. Phosphoserine is present on residues Ser-780, Ser-787, Ser-827, and Ser-837. Residues 898 to 917 (EEIPKSYLPQTVRQGGYMPQ) form a disordered region.

Belongs to the type I cytokine receptor family. Type 2 subfamily. In terms of assembly, component of a hexamer of two molecules each of IL6, IL6R and IL6ST; associates with the complex IL6:IL6R but does not interact with IL6. Forms heterodimers composed of LIFR and IL6ST (type I OSM receptor) which are activated by LIF and OSM. Also forms heterodimers composed of OSMR and IL6ST (type II receptor) which are activated by OSM but not by LIF. Interacts with HCK. Interacts with INPP5D/SHIP1. Interacts with SRC and YES. Interacts with ARMH4; this interaction prevents IL6ST protein homodimerization and bridges ARMH4 with IL6R and STAT3 and therefore inhibits phosphorylation of STAT3 at 'Tyr-705'. Phosphorylation of Ser-780 down-regulates cell surface expression. Post-translationally, heavily N-glycosylated. Glycosylation is required for protein stability and localization in plasma membrane but not for ligand binding. In terms of tissue distribution, expression not restricted to IL6-responsive cells. Found in tissues such as brain, heart, thymus, spleen, kidney, lung and liver. Found in all the cell lines tested except BaF-B03. Expressed paraventricular nucleus of the hypothalamus.

It localises to the cell membrane. Signal-transducing molecule. The receptor systems for IL6, LIF, OSM, CNTF, IL11, CTF1 and BSF3 can utilize IL6ST for initiating signal transmission. Binding of IL6 to IL6R induces IL6ST homodimerization and formation of a high-affinity receptor complex, which activates the intracellular JAK-MAPK and JAK-STAT3 signaling pathways. That causes phosphorylation of IL6ST tyrosine residues which in turn activates STAT3. In parallel, the IL6 signaling pathway induces the expression of two cytokine receptor signaling inhibitors, SOCS1 and SOCS3, which inhibit JAK and terminate the activity of the IL6 signaling pathway as a negative feedback loop. Also activates the yes-associated protein 1 (YAP) and NOTCH pathways to control inflammation-induced epithelial regeneration, independently of STAT3. Mediates signals which regulate immune response, hematopoiesis, pain control and bone metabolism. Has a role in embryonic development. Essential for survival of motor and sensory neurons and for differentiation of astrocytes. Required for expression of TRPA1 in nociceptive neurons. Required for the maintenance of PTH1R expression in the osteoblast lineage and for the stimulation of PTH-induced osteoblast differentiation. Required for normal trabecular bone mass and cortical bone composition. This chain is Interleukin-6 receptor subunit beta, found in Mus musculus (Mouse).